A 390-amino-acid polypeptide reads, in one-letter code: E3 ubiquitin-protein ligase At4g11680 (390 aa).

Low complexity predominate over residues 1-19 (MSSSSSTTTNTTTESDSSS). Residues 1-39 (MSSSSSTTTNTTTESDSSSLPTHIGRSNSDGIIDTTPFL) are disordered. The next 5 membrane-spanning stretches (helical) occupy residues 109 to 129 (VVFL…AVLI), 142 to 162 (VWVV…CVEY), 212 to 232 (MFSF…GQTL), 244 to 264 (IIFL…ACVI), and 265 to 285 (GLAV…VADQ). The RING-type; atypical zinc finger occupies 338-379 (CCICLCEYEDGVELRELPCNHHFHCTCIDKWLHINSRCPLCK).

The protein localises to the membrane. The enzyme catalyses S-ubiquitinyl-[E2 ubiquitin-conjugating enzyme]-L-cysteine + [acceptor protein]-L-lysine = [E2 ubiquitin-conjugating enzyme]-L-cysteine + N(6)-ubiquitinyl-[acceptor protein]-L-lysine.. The protein operates within protein modification; protein ubiquitination. Mediates E2-dependent protein ubiquitination in vitro. The sequence is that of E3 ubiquitin-protein ligase At4g11680 from Arabidopsis thaliana (Mouse-ear cress).